We begin with the raw amino-acid sequence, 384 residues long: MDEFHRDTWVEIDLDAIYDNVANLRRFLPEGTQIMAVVKANAYGHGDAQVAATALEAGASRLAVAFLDEALALRKKGIDAPILVLGASRPEDVALAAEHRIALTVFRSDWLEKASSLYNGSTPIHFHLKMDTGMGRLGVKDEEETKRIAALIDRHPPFVLEGVYTHFATADEVNTDYFSYQYARFLHMLDWLPSRPPLVHCANSAAALRFSDRAFNMVRFGISMYGLAPSPDIKPLLPYELKEAFSLHSRLVHVKKLQPGEKVSYGATYTAQTEEWIGTIPIGYADGWLRRLQHFHVLVGGQRAPIVGRICMDQCMIRLPEPLPVGTKVTLIGRQGDEVISIDDVARHLGTINYEVPCTIGYRVPRIFFRNKRIMEVRNAVGRG.

Catalysis depends on K39, which acts as the Proton acceptor; specific for D-alanine. Residue K39 is modified to N6-(pyridoxal phosphate)lysine. Substrate is bound at residue R136. Catalysis depends on Y265, which acts as the Proton acceptor; specific for L-alanine. M312 serves as a coordination point for substrate.

It belongs to the alanine racemase family. It depends on pyridoxal 5'-phosphate as a cofactor.

The enzyme catalyses L-alanine = D-alanine. Its pathway is amino-acid biosynthesis; D-alanine biosynthesis; D-alanine from L-alanine: step 1/1. Its function is as follows. Catalyzes the interconversion of L-alanine and D-alanine. May also act on other amino acids. This is Alanine racemase (alr) from Geobacillus kaustophilus (strain HTA426).